Reading from the N-terminus, the 331-residue chain is Reticulocalbin-1 (331 aa).

The first 29 residues, 1 to 29 (MARGGRGRRLGLALGLLLALVLAPRVLRA), serve as a signal peptide directing secretion. The N-linked (GlcNAc...) asparagine glycan is linked to N53. S55 carries the post-translational modification Phosphoserine. T76 carries the post-translational modification Phosphothreonine. 6 consecutive EF-hand domains span residues 79-114 (ESKERLGKIVDRIDNDGDGFVTTEELKTWIKRVQKR), 115-150 (YIFDNVAKVWKDYDRDKDDKISWEEYKQATYGYYLG), 166-201 (KMLPRDERRFKAADLNGDLTATREEFTAFLHPEEFE), 203-238 (MKEIVVLETLEDIDKNGDGFVDQDEYIADMFSHEEN), 244-279 (WVLSEREQFNEFRDLNKDGKLDKDEIRHWILPQDYD), and 280-315 (HAQAEARHLVYESDKNKDEKLTKEEILENWNMFVGS). S80 carries the phosphoserine; by FAM20C modification. Residues D92, D94, D96, E103, D128, D130, D132, K134, E139, D179, N181, D183, T185, E190, D216, N218, D220, E227, D257, N259, D261, K263, E268, D293, N295, D297, K299, and E304 each contribute to the Ca(2+) site. The short motif at 328 to 331 (HDEL) is the Prevents secretion from ER element.

Belongs to the CREC family. In terms of processing, O-glycosylated. O-mannosylated by POMT1 and POMT2 and elongated by POMGNT1.

The protein resides in the endoplasmic reticulum lumen. Its function is as follows. May regulate calcium-dependent activities in the endoplasmic reticulum lumen or post-ER compartment. This chain is Reticulocalbin-1 (RCN1), found in Homo sapiens (Human).